A 193-amino-acid polypeptide reads, in one-letter code: Thymidine kinase (193 aa).

ATP-binding positions include 14–21 (GCMFSGKT) and 87–90 (DELH). The Proton acceptor role is filled by Glu-88. Zn(2+) contacts are provided by Cys-147, Cys-150, Cys-185, and Cys-188.

Belongs to the thymidine kinase family. As to quaternary structure, homotetramer.

Its subcellular location is the cytoplasm. The catalysed reaction is thymidine + ATP = dTMP + ADP + H(+). This Roseiflexus sp. (strain RS-1) protein is Thymidine kinase.